The following is a 337-amino-acid chain: Eukaryotic translation initiation factor 3 subunit H (337 aa).

The MPN domain maps to 21–153 (VQCDGLAVMK…LKAYRLTPQA (133 aa)).

It belongs to the eIF-3 subunit H family. As to quaternary structure, component of the eukaryotic translation initiation factor 3 (eIF-3) complex. The eIF-3 complex interacts with pix. Interacts with mxt.

Its subcellular location is the cytoplasm. Functionally, component of the eukaryotic translation initiation factor 3 (eIF-3) complex, which is involved in protein synthesis of a specialized repertoire of mRNAs and, together with other initiation factors, stimulates binding of mRNA and methionyl-tRNAi to the 40S ribosome. The eIF-3 complex specifically targets and initiates translation of a subset of mRNAs involved in cell proliferation. This Drosophila pseudoobscura pseudoobscura (Fruit fly) protein is Eukaryotic translation initiation factor 3 subunit H.